We begin with the raw amino-acid sequence, 444 residues long: tRNA modification GTPase MnmE (444 aa).

(6S)-5-formyl-5,6,7,8-tetrahydrofolate contacts are provided by Arg22, Glu79, and Arg118. The 155-residue stretch at 214–368 folds into the TrmE-type G domain; the sequence is GMQVVLAGPP…LRDHLKSVMG (155 aa). Asn224 contributes to the K(+) binding site. GTP is bound by residues 224–229, 243–249, and 268–271; these read NAGKSS, TEVPGTT, and DTAG. Ser228 is a Mg(2+) binding site. Thr243, Val245, and Thr248 together coordinate K(+). A Mg(2+)-binding site is contributed by Thr249. Lys444 is a binding site for (6S)-5-formyl-5,6,7,8-tetrahydrofolate.

Belongs to the TRAFAC class TrmE-Era-EngA-EngB-Septin-like GTPase superfamily. TrmE GTPase family. Homodimer. Heterotetramer of two MnmE and two MnmG subunits. Requires K(+) as cofactor.

The protein resides in the cytoplasm. Its function is as follows. Exhibits a very high intrinsic GTPase hydrolysis rate. Involved in the addition of a carboxymethylaminomethyl (cmnm) group at the wobble position (U34) of certain tRNAs, forming tRNA-cmnm(5)s(2)U34. The protein is tRNA modification GTPase MnmE of Alkalilimnicola ehrlichii (strain ATCC BAA-1101 / DSM 17681 / MLHE-1).